Consider the following 402-residue polypeptide: Succinyl-CoA--D-citramalate CoA-transferase (402 aa).

The Nucleophile role is filled by Asp174.

Belongs to the CoA-transferase III family. As to quaternary structure, homodimer.

It carries out the reaction (3R)-citramalate + succinyl-CoA = (3R)-citramalyl-CoA + succinate. The catalysed reaction is (R)-malate + succinyl-CoA = (R)-malyl-CoA + succinate. Its function is as follows. Involved in the 3-hydroxypropionate cycle used for autotrophic carbon dioxide fixation, and in the glyoxylate assimilation cycle used to regenerate acetyl-CoA and produce pyruvate as universal precursor for biosynthesis. Catalyzes the transfer of CoA moiety from succinyl-CoA to D-citramalate to yield citramalyl-CoA. The protein is Succinyl-CoA--D-citramalate CoA-transferase of Chloroflexus aurantiacus (strain ATCC 29366 / DSM 635 / J-10-fl).